The primary structure comprises 169 residues: Ribosome maturation factor RimM (169 aa).

A PRC barrel domain is found at 92–166; that stretch reads NKEYYWNDIF…IVIDLTNLNN (75 aa).

It belongs to the RimM family. In terms of assembly, binds ribosomal protein uS19.

It localises to the cytoplasm. An accessory protein needed during the final step in the assembly of 30S ribosomal subunit, possibly for assembly of the head region. Essential for efficient processing of 16S rRNA. May be needed both before and after RbfA during the maturation of 16S rRNA. It has affinity for free ribosomal 30S subunits but not for 70S ribosomes. The sequence is that of Ribosome maturation factor RimM from Buchnera aphidicola subsp. Cinara cedri (strain Cc).